Consider the following 174-residue polypeptide: MAFPDTDVSPPRGGPSSPAKSPLLRSFKVKTYIPKNDEQNWVVVDASGVPLGRLATLIASRIRGKHRPDFTPNMIQGDFVVVINAAQVALTGKKLDDKVYTRYTGYQGGLKTETAREALSKHPERVIEHAVFGMLPKGRQGRAMHTRLKVYAGETHPHSAQKPQVLKTQPLEVK.

Disordered stretches follow at residues 1 to 22 (MAFP…AKSP) and 153 to 174 (GETH…LEVK).

The protein belongs to the universal ribosomal protein uL13 family. Part of the 50S ribosomal subunit. Contacts proteins L3 and L20.

Its function is as follows. This protein is one of the early assembly proteins of the 50S ribosomal subunit. Binds to the 23S rRNA. In Deinococcus radiodurans (strain ATCC 13939 / DSM 20539 / JCM 16871 / CCUG 27074 / LMG 4051 / NBRC 15346 / NCIMB 9279 / VKM B-1422 / R1), this protein is Large ribosomal subunit protein uL13 (rplM).